Consider the following 260-residue polypeptide: Manganese transport system ATP-binding protein MntA (260 aa).

The ABC transporter domain occupies I10–P245. G43–S50 contacts ATP.

This sequence belongs to the ABC transporter superfamily.

In terms of biological role, part of an ATP-driven transport system for manganese. The chain is Manganese transport system ATP-binding protein MntA (mntA) from Synechocystis sp. (strain ATCC 27184 / PCC 6803 / Kazusa).